Consider the following 177-residue polypeptide: ATP synthase subunit delta (177 aa).

It belongs to the ATPase delta chain family. In terms of assembly, F-type ATPases have 2 components, F(1) - the catalytic core - and F(0) - the membrane proton channel. F(1) has five subunits: alpha(3), beta(3), gamma(1), delta(1), epsilon(1). F(0) has three main subunits: a(1), b(2) and c(10-14). The alpha and beta chains form an alternating ring which encloses part of the gamma chain. F(1) is attached to F(0) by a central stalk formed by the gamma and epsilon chains, while a peripheral stalk is formed by the delta and b chains.

The protein localises to the cell membrane. Its function is as follows. F(1)F(0) ATP synthase produces ATP from ADP in the presence of a proton or sodium gradient. F-type ATPases consist of two structural domains, F(1) containing the extramembraneous catalytic core and F(0) containing the membrane proton channel, linked together by a central stalk and a peripheral stalk. During catalysis, ATP synthesis in the catalytic domain of F(1) is coupled via a rotary mechanism of the central stalk subunits to proton translocation. In terms of biological role, this protein is part of the stalk that links CF(0) to CF(1). It either transmits conformational changes from CF(0) to CF(1) or is implicated in proton conduction. This Macrococcus caseolyticus (strain JCSC5402) (Macrococcoides caseolyticum) protein is ATP synthase subunit delta.